Consider the following 147-residue polypeptide: Hemoglobin subunit delta (147 aa).

At Val2 the chain carries N-acetylalanine; in variant Niigata. The Globin domain occupies 3-147 (HLTPEEKTAV…VANALAHKYH (145 aa)). Ser51 carries the phosphoserine modification. 2 residues coordinate heme b: His64 and His93.

It belongs to the globin family. As to quaternary structure, heterotetramer of two alpha chains and two delta chains in adult hemoglobin A2 (HbA2). HbA2 represents less than 3.5% of adult hemoglobin. Red blood cells.

Its function is as follows. Involved in oxygen transport from the lung to the various peripheral tissues. The sequence is that of Hemoglobin subunit delta (HBD) from Homo sapiens (Human).